Reading from the N-terminus, the 244-residue chain is MKVKTSLSTLILILFLTGCKVDLYTGISQKEGNEMLALLRQEGLSADKEPDKDGKIKLLVEESDVAQAIDILKRKGYPHESFSTLQDVFPKDGLISSPIEELARLNYAKAQEISRTLSEIDGVLVARVHVVLPEEQNNKGKKGVAASASVFIKHAADIQFDTYIPQIKQLVNNSIEGLAYDRISVILVPSVDVRQSSHLPRNTSILSIQVSEESKGRLIGLLSLLILLLPVTNLAQYFWLQRKK.

The first 18 residues, 1-18, serve as a signal peptide directing secretion; that stretch reads MKVKTSLSTLILILFLTG. A lipid anchor (N-palmitoyl cysteine) is attached at cysteine 19. The S-diacylglycerol cysteine moiety is linked to residue cysteine 19. Residues 218–238 traverse the membrane as a helical segment; sequence LIGLLSLLILLLPVTNLAQYF.

The protein belongs to the YscJ lipoprotein family.

The protein localises to the cell outer membrane. Required for the export process of the Yop proteins. This is Yop proteins translocation lipoprotein J (yscJ) from Yersinia enterocolitica.